Here is a 77-residue protein sequence, read N- to C-terminus: Structural DNA-binding protein p10 (77 aa).

Positions 1–12 (MPTKAGTKSTAN) are enriched in polar residues. The tract at residues 1–38 (MPTKAGTKSTANKKTTKGPSKSGSAKGHTGKTHATALH) is disordered. Positions 17 to 27 (KGPSKSGSAKG) are enriched in low complexity.

Belongs to the asfivirus P10 family.

The protein resides in the virion. Its function is as follows. May play a role in genome packaging through direct interaction with viral DNA. Binds to ssDNA and dsDNA with the same apparent affinity in vitro. This is Structural DNA-binding protein p10 from Ornithodoros (relapsing fever ticks).